A 700-amino-acid polypeptide reads, in one-letter code: MAGIAAKLVKDREAAEGLGSHERAIKYLNQDYEALRNECLEAGTLFQDPSFPAIPSALGFKELGPYSSKTRGIEWKRPTEICADPQFIIGGATRTDICQGALGDCWLLAAIASLTLNEEILARVVPLNQSFQENYAGIFHFQFWQYGEWVEVVVDDRLPTKDGELLFVHSAEGSEFWSALLEKAYAKINGCYEALSGGATTEGFEDFTGGIAEWYELKKPPPNLFKIIQKALQKGSLLGCSIDITSAADSEAITYQKLVKGHAYSVTGAEEVESSGSLQKLIRIRNPWGEVEWTGRWNDNCPSWNTIDPEERERLTRRHEDGEFWMSFSDFLRHYSRLEICNLTPDTLTSDTYKKWKLTKMDGNWRRGSTAGGCRNYPNTFWMNPQYLIKLEEEDEDEEDGESGCTFLVGLIQKHRRRQRKMGEDMHTIGFGIYEVPEELSGQTNIHLSKNFFLTNRARERSDTFINLREVLNRFKLPPGEYILVPSTFEPNKDGDFCIRVFSEKKADYQAVDDEIEANLEEFDISEDDIDDGFRRLFAQLAGEDAEISAFELQTILRRVLAKRQDIKSDGFSIETCKIMVDMLDSDGSGKLGLKEFYILWTKIQKYQKIYREIDVDRSGTMNSYEMRKALEEAGFKMPCQLHQVIVARFADDQLIIDFDNFVRCLVRLETLFKIFKQLDPENTGTIELDLISWLCFSVL.

Ala2 bears the N-acetylalanine mark. The propeptide at 2–19 (AGIAAKLVKDREAAEGLG) is anchors to the small subunit. The 300-residue stretch at 45 to 344 (LFQDPSFPAI…YSRLEICNLT (300 aa)) folds into the Calpain catalytic domain. 3 residues coordinate Ca(2+): Ile89, Gly91, and Asp96. Cys105 is a catalytic residue. Glu175, Gln229, and Lys230 together coordinate Ca(2+). Catalysis depends on residues His262 and Asn286. Ca(2+) contacts are provided by Glu292, Asp299, and Glu323. Positions 345–514 (PDTLTSDTYK…KKADYQAVDD (170 aa)) are domain III. The interval 515–529 (EIEANLEEFDISEDD) is linker. Residues 530 to 700 (IDDGFRRLFA…LISWLCFSVL (171 aa)) are domain IV. The Ca(2+) site is built by Ala542, Asp545, Glu547, Glu552, Asp585, Asp587, Ser589, Lys591, Glu596, Asp615, Asp617, Ser619, Thr621, Glu626, Asp658, and Asn661. EF-hand domains are found at residues 572–605 (FSIETCKIMVDMLDSDGSGKLGLKEFYILWTKIQ) and 602–637 (TKIQKYQKIYREIDVDRSGTMNSYEMRKALEEAGFK). In terms of domain architecture, EF-hand 3 spans 667 to 700 (VRLETLFKIFKQLDPENTGTIELDLISWLCFSVL).

Belongs to the peptidase C2 family. As to quaternary structure, forms a heterodimer with a small (regulatory) subunit (CAPNS1). Interacts with CPEB3; this leads to cleavage of CPEB3. Ca(2+) serves as cofactor.

The protein localises to the cytoplasm. It localises to the cell membrane. It catalyses the reaction Broad endopeptidase specificity.. With respect to regulation, activated by 200-1000 micromolar concentrations of calcium and inhibited by calpastatin. Calcium-regulated non-lysosomal thiol-protease which catalyzes limited proteolysis of substrates involved in cytoskeletal remodeling and signal transduction. Proteolytically cleaves MYOC at 'Arg-226'. Proteolytically cleaves CPEB3 following neuronal stimulation which abolishes CPEB3 translational repressor activity, leading to translation of CPEB3 target mRNAs. The chain is Calpain-2 catalytic subunit (CAPN2) from Macaca fascicularis (Crab-eating macaque).